Consider the following 216-residue polypeptide: Translation initiation factor 6 (216 aa).

The protein belongs to the eIF-6 family.

In terms of biological role, binds to the 50S ribosomal subunit and prevents its association with the 30S ribosomal subunit to form the 70S initiation complex. The polypeptide is Translation initiation factor 6 (Thermoplasma acidophilum (strain ATCC 25905 / DSM 1728 / JCM 9062 / NBRC 15155 / AMRC-C165)).